We begin with the raw amino-acid sequence, 179 residues long: Large ribosomal subunit protein uL6 (179 aa).

This sequence belongs to the universal ribosomal protein uL6 family. Part of the 50S ribosomal subunit.

In terms of biological role, this protein binds to the 23S rRNA, and is important in its secondary structure. It is located near the subunit interface in the base of the L7/L12 stalk, and near the tRNA binding site of the peptidyltransferase center. In Rippkaea orientalis (strain PCC 8801 / RF-1) (Cyanothece sp. (strain PCC 8801)), this protein is Large ribosomal subunit protein uL6.